The following is a 340-amino-acid chain: tRNA N6-adenosine threonylcarbamoyltransferase (340 aa).

2 residues coordinate Fe cation: His-115 and His-119. Substrate is bound by residues 138–142 (VVSGG), Asp-171, Gly-184, Asp-188, and Asn-278. Asp-306 contacts Fe cation.

Belongs to the KAE1 / TsaD family. Fe(2+) serves as cofactor.

The protein resides in the cytoplasm. It catalyses the reaction L-threonylcarbamoyladenylate + adenosine(37) in tRNA = N(6)-L-threonylcarbamoyladenosine(37) in tRNA + AMP + H(+). In terms of biological role, required for the formation of a threonylcarbamoyl group on adenosine at position 37 (t(6)A37) in tRNAs that read codons beginning with adenine. Is involved in the transfer of the threonylcarbamoyl moiety of threonylcarbamoyl-AMP (TC-AMP) to the N6 group of A37, together with TsaE and TsaB. TsaD likely plays a direct catalytic role in this reaction. The protein is tRNA N6-adenosine threonylcarbamoyltransferase of Clostridium botulinum (strain Hall / ATCC 3502 / NCTC 13319 / Type A).